The chain runs to 348 residues: LIM domain-containing protein unc-97 (348 aa).

LIM zinc-binding domains lie at Cys-21–Asp-73, Cys-82–Cys-132, Cys-146–Cys-196, Cys-205–His-255, and Cys-264–Cys-315.

As to quaternary structure, interacts with unc-98. Component of an integrin containing attachment complex, composed of at least pat-2, pat-3, pat-4, pat-6, unc-52, unc-97 and unc-112. Restricted to tissue types that attach to the hypodermis, specifically body wall muscles, vulval muscles, and mechanosensory neurons.

The protein localises to the cell junction. It localises to the adherens junction. The protein resides in the nucleus. In terms of biological role, component of an integrin containing attachment complex, which is required for muscle development and maintenance. Probably function in adherens junction. Affects the structural integrity of the integrin containing muscle adherens junctions and contributes to the mechanosensory functions of touch neurons. The polypeptide is LIM domain-containing protein unc-97 (Caenorhabditis elegans).